We begin with the raw amino-acid sequence, 154 residues long: Myoglobin (154 aa).

One can recognise a Globin domain in the interval 2–148 (GLSDGEWQLV…FRNDIAAKYK (147 aa)). Ser4 is subject to Phosphoserine. His65 provides a ligand contact to nitrite. His65 provides a ligand contact to O2. Thr68 carries the phosphothreonine modification. Residue His94 coordinates heme b.

It belongs to the globin family. In terms of assembly, monomeric.

The protein resides in the cytoplasm. Its subcellular location is the sarcoplasm. It catalyses the reaction Fe(III)-heme b-[protein] + nitric oxide + H2O = Fe(II)-heme b-[protein] + nitrite + 2 H(+). The catalysed reaction is H2O2 + AH2 = A + 2 H2O. In terms of biological role, monomeric heme protein which primary function is to store oxygen and facilitate its diffusion within muscle tissues. Reversibly binds oxygen through a pentacoordinated heme iron and enables its timely and efficient release as needed during periods of heightened demand. Depending on the oxidative conditions of tissues and cells, and in addition to its ability to bind oxygen, it also has a nitrite reductase activity whereby it regulates the production of bioactive nitric oxide. Under stress conditions, like hypoxia and anoxia, it also protects cells against reactive oxygen species thanks to its pseudoperoxidase activity. This chain is Myoglobin (MB), found in Sciurus vulgaris (Eurasian red squirrel).